The primary structure comprises 274 residues: 2,3,4,5-tetrahydropyridine-2,6-dicarboxylate N-succinyltransferase (274 aa).

Positions 104 and 141 each coordinate substrate.

This sequence belongs to the transferase hexapeptide repeat family. As to quaternary structure, homotrimer.

The protein resides in the cytoplasm. The enzyme catalyses (S)-2,3,4,5-tetrahydrodipicolinate + succinyl-CoA + H2O = (S)-2-succinylamino-6-oxoheptanedioate + CoA. It functions in the pathway amino-acid biosynthesis; L-lysine biosynthesis via DAP pathway; LL-2,6-diaminopimelate from (S)-tetrahydrodipicolinate (succinylase route): step 1/3. The polypeptide is 2,3,4,5-tetrahydropyridine-2,6-dicarboxylate N-succinyltransferase (Shewanella baltica (strain OS155 / ATCC BAA-1091)).